The chain runs to 122 residues: Vitelline membrane protein 15a-3 (122 aa).

The N-terminal stretch at 1 to 17 (MNKFIILALFAVAAASA) is a signal peptide. Positions 21 to 49 (YPPPPPKPYHAPPPPPHHAHPPPPPPPPA) are enriched in pro residues. Disordered regions lie at residues 21–63 (YPPP…APVV) and 103–122 (PAPA…QFEE). The 41-residue stretch at 69–109 (HAPHAKCGANLLVGCAPSVAHAPCVPLHGHGHGYPAPAPHY) folds into the VM domain.

The protein belongs to the vitelline membrane protein family. As to expression, expressed in the middle and posterior regions of the follicle cells.

It localises to the secreted. In Aedes aegypti (Yellowfever mosquito), this protein is Vitelline membrane protein 15a-3.